Reading from the N-terminus, the 134-residue chain is UPF0412 protein YaaI (134 aa).

The N-terminal stretch at Met1–Ala23 is a signal peptide.

It belongs to the UPF0412 family.

This Escherichia coli (strain ATCC 8739 / DSM 1576 / NBRC 3972 / NCIMB 8545 / WDCM 00012 / Crooks) protein is UPF0412 protein YaaI.